A 112-amino-acid chain; its full sequence is Ribonuclease P protein component (112 aa).

This sequence belongs to the RnpA family. In terms of assembly, consists of a catalytic RNA component (M1 or rnpB) and a protein subunit.

It carries out the reaction Endonucleolytic cleavage of RNA, removing 5'-extranucleotides from tRNA precursor.. Its function is as follows. RNaseP catalyzes the removal of the 5'-leader sequence from pre-tRNA to produce the mature 5'-terminus. It can also cleave other RNA substrates such as 4.5S RNA. The protein component plays an auxiliary but essential role in vivo by binding to the 5'-leader sequence and broadening the substrate specificity of the ribozyme. The chain is Ribonuclease P protein component from Clostridium kluyveri (strain ATCC 8527 / DSM 555 / NBRC 12016 / NCIMB 10680 / K1).